A 429-amino-acid chain; its full sequence is MKKQNNLRSLAAQAVEQVVEQGQSLSNVLPPLQQKVADKDKALLQELCFGVLRTLSQLEWLINKLMSRPMTGKQRTVHYLIMVGFYQLLYTRVPPHAALAETVEGAVSIKRPQLKGLINGVLRQFQRQQETLLNEFATSDARFLHPGWLVKRLQNAYPTQWQHIIEANNQRPPMWLRVNRTHHTRDGWLGLLEDAGMKGYPHPDYPDAVRLETPAPVHALPGFAEGWVTVQDASAQKCVAFLAPQNGEHILDLCAAPGGKTTHILEAAPEADVLAVDVDEQRLSRIYDNLKRLGMKATVKQGDGRYPAQWCDEQQFDRILLDAPCSATGVIRRHPDIKWLRRDRDIAELAKLQAEILDTVWPRLKPGGTLVYATCSVLPEENSAQINAFLQRTPDAALSETGTPDQPGQQNLPGAEEGDGFFYAKLIKK.

S-adenosyl-L-methionine-binding positions include 254–260 (CAAPGGK), aspartate 277, aspartate 303, and aspartate 322. The Nucleophile role is filled by cysteine 375.

Belongs to the class I-like SAM-binding methyltransferase superfamily. RsmB/NOP family.

It localises to the cytoplasm. The catalysed reaction is cytidine(967) in 16S rRNA + S-adenosyl-L-methionine = 5-methylcytidine(967) in 16S rRNA + S-adenosyl-L-homocysteine + H(+). Specifically methylates the cytosine at position 967 (m5C967) of 16S rRNA. In Salmonella arizonae (strain ATCC BAA-731 / CDC346-86 / RSK2980), this protein is Ribosomal RNA small subunit methyltransferase B.